A 1249-amino-acid polypeptide reads, in one-letter code: Nuclear envelope pore membrane protein POM 121 (1249 aa).

The segment covering 1 to 10 (MSPAAAAAGA) has biased composition (low complexity). The disordered stretch occupies residues 1-27 (MSPAAAAAGAGERRRPIASVRDGRGRG). The segment at 1–34 (MSPAAAAAGAGERRRPIASVRDGRGRGCGGPARA) is cisternal side. Residues 1 to 285 (MSPAAAAAGA…APPDRRFSRS (285 aa)) form a required for targeting to the nucleus and nuclear pore complex region. Positions 11-25 (GERRRPIASVRDGRG) are enriched in basic and acidic residues. A helical membrane pass occupies residues 35–55 (VLLGLSLVGLLLYLVPAAAAL). Residues 56–1249 (AWLTVGATAA…QARRQHTRKK (1194 aa)) are pore side. S94 is modified (phosphoserine). Disordered stretches follow at residues 136 to 220 (LMGS…CGTL), 319 to 530 (KEKK…LGYS), 602 to 776 (KKMQ…PVFS), 959 to 986 (PLPS…AKPA), and 1226 to 1249 (IGAG…TRKK). Residues 168–190 (ARPAPRSPPPRSPPPRSPPPSPP) show a composition bias toward pro residues. 5 positions are modified to phosphoserine: S345, S351, S371, S393, and S396. Positions 405 to 423 (IPSSSRNAITSSYSSTRGI) are enriched in polar residues. Positions 432–445 (PSSSPFSSPASSRS) are enriched in low complexity. Basic and acidic residues-rich tracts occupy residues 450-462 (RPAK…ELCH) and 472-486 (ADRE…DTTP). Polar residues predominate over residues 491–502 (NSNSQSTPGSSG). A compositionally biased stretch (low complexity) spans 635–652 (PPLGLSQSGPPGLLPSPS). Residues 683–696 (QAETATKPQATSAP) are compositionally biased toward polar residues. Composition is skewed to low complexity over residues 712 to 726 (SPSS…SAPP) and 749 to 770 (SVTA…TAPT). Positions 1239-1249 (LQARRQHTRKK) are enriched in basic residues.

This sequence belongs to the POM121 family.

The protein resides in the nucleus. It localises to the nuclear pore complex. The protein localises to the nucleus membrane. It is found in the endoplasmic reticulum membrane. Essential component of the nuclear pore complex (NPC). The repeat-containing domain may be involved in anchoring components of the pore complex to the pore membrane. When overexpressed in cells induces the formation of cytoplasmic annulate lamellae (AL). This chain is Nuclear envelope pore membrane protein POM 121 (POM121), found in Homo sapiens (Human).